A 751-amino-acid polypeptide reads, in one-letter code: MSNETKCPFSHAAGGGTTNRDWWPNQLRLDLLSQHSSKSNPLGGDFNYAKAFKSLDFAAVKKDLAALMTDSQDWWPADFGHYGPLFIRMAWHSAGTYRIGDGRGGAGRGQQRFAPLNSWPDNASLDKARRLLWPIKQKYGQKISWADLMILAGNVALETMGFKTFGFGGGREDTWEPDADVSWGKEKTWLGGDLRYGKGAAGKDEGVVVADEALHGTETSRTDSGRNLENPLAAVQMGLIYVNPEGPDGNPDPLAAAHDIRESFGRMAMDDEETVALIAGGHAFGKTHGAGPADNIGPEPEGADLERQGLGWASTFGTGKGADTITSGLEVTWSNTPTKWGNSYLENLFGHEWELTKSPAGANQWVAKDAAETIPHAYDPAKKLRPTMLTTDLSLRFDPAYEKISRRFLEHPDQLADAFARAWFKLIHRDMGPRARYLGPEVPAEELLWQDPIPAVDHPLVNEQDVAALKQKILASGLPVSQLVQTAWASASTFRGSDKRGGANGARIRLAPQKDWAANEPEQLAKVLKVLEGIQAEFNGAQSGGKKISLADLIVLAGGAGIEQAAQKAGHRVTVPFTPGRMDASQEQTDVQSVGALEPIADGFRNFLKGKYNIRAEDLLIDKAQLLTLTAPEMTVLIGGLRVLNVHTGQDAHGVFTDRPETLSNDFFRNLLDMRTEWKPLSEARDVFEGRDAKTGAKKWTGTRVDLVFGSNSQLRALCEVYASEDGQEKFVRDFVAAWAKVMNLDRFDVA.

The first 12 residues, 1–12 (MSNETKCPFSHA), serve as a signal peptide directing secretion. The tryptophyl-tyrosyl-methioninium (Trp-Tyr) (with M-267) cross-link spans 91-241 (WHSAGTYRIG…LAAVQMGLIY (151 aa)). His92 (proton acceptor) is an active-site residue. Positions 241-267 (YVNPEGPDGNPDPLAAAHDIRESFGRM) form a cross-link, tryptophyl-tyrosyl-methioninium (Tyr-Met) (with W-91). His282 lines the heme b pocket.

Belongs to the peroxidase family. Peroxidase/catalase subfamily. Homodimer or homotetramer. Heme b is required as a cofactor. Post-translationally, formation of the three residue Trp-Tyr-Met cross-link is important for the catalase, but not the peroxidase activity of the enzyme.

It catalyses the reaction H2O2 + AH2 = A + 2 H2O. The enzyme catalyses 2 H2O2 = O2 + 2 H2O. Its function is as follows. Bifunctional enzyme with both catalase and broad-spectrum peroxidase activity. This Cupriavidus necator (strain ATCC 17699 / DSM 428 / KCTC 22496 / NCIMB 10442 / H16 / Stanier 337) (Ralstonia eutropha) protein is Catalase-peroxidase.